Reading from the N-terminus, the 457-residue chain is MIFLPVTSVVFAISWIYSGVSAFNPYSSTPYSLKYVDEQEFLSVIDNETLLQEGRLFRPYEGSDVLCYQRNTSSLIQHHEEDTFNSEGALIEAVNMVNAILAPNPIEMNTVPISYWTYIISSGETRTVVQKGYFGETYLLGNSSNYNSTIDYHFAKSKTGRVYLSETLVDGCTCDLTHKPREVEIQYICPKRPLSRPFHLEVREIQSCKYQLRLFLPQLCELSSFNPLLGQLSEHNIICHRSGSKLSPALDIFNRYSATVLDHGIYLLKPKNSAKDRRQLMYHAAEPLDSQTTLFELTVEERFIGDFISSLKKLIGSDFIQSPTGKSIKPGDLFLWRAPVVDETGNLLFLIDLELNSASEAIGKVNNDASLLNELPIHNMVYFDSMTVNQTDETSSNSLPEKSTGLVPDIFATDEIESPYKGGTAQELKDKLMEAFRDIGYPDIEVEILEEVVEEQN.

An N-terminal signal peptide occupies residues 1 to 22; sequence MIFLPVTSVVFAISWIYSGVSA. 2 N-linked (GlcNAc...) asparagine glycosylation sites follow: N47 and N71. The 119-residue stretch at 104–222 folds into the MRH domain; the sequence is NPIEMNTVPI…RLFLPQLCEL (119 aa). W116 serves as a coordination point for a mannooligosaccharide derivative. 2 N-linked (GlcNAc...) asparagine glycosylation sites follow: N142 and N147. Cystine bridges form between C174-C208 and C189-C220. 4 residues coordinate a mannooligosaccharide derivative: D175, R181, E204, and Y210. N-linked (GlcNAc...) asparagine glycosylation occurs at N389.

It belongs to the OS-9 family. In terms of assembly, interacts with missfolded ER lumenal proteins.

The protein resides in the endoplasmic reticulum membrane. Its function is as follows. Lectin involved in the quality control of the secretory pathway. As a member of the endoplasmic reticulum-associated degradation lumenal (ERAD-L) surveillance system, targets misfolded endoplasmic reticulum lumenal glycoproteins for degradation. The polypeptide is Protein OS-9 homolog (YOS9) (Kluyveromyces lactis (strain ATCC 8585 / CBS 2359 / DSM 70799 / NBRC 1267 / NRRL Y-1140 / WM37) (Yeast)).